We begin with the raw amino-acid sequence, 212 residues long: MIGVIDYGMGNLYSVSKALERIDAPYFVSEHPDELKRADSYILPGVGAFRDAMEILTENGLKTFIQAAANEGKPLLGICLGMQLLFEESEEHGASEGLGLLKGKVVKLKDCDQAGNRLKVPHMGWNLLKVHRDSPLLPKAKEGFAYFVHSYYVSGIEEEALLASAEYGVCVPAVVGLGNVYGAQFHPEKSSTVGMLILERFKQFTQEQKVKK.

The Glutamine amidotransferase type-1 domain occupies 1-211; it reads MIGVIDYGMG…KQFTQEQKVK (211 aa). Cysteine 79 (nucleophile) is an active-site residue. Catalysis depends on residues histidine 186 and glutamate 188.

As to quaternary structure, heterodimer of HisH and HisF.

Its subcellular location is the cytoplasm. It carries out the reaction 5-[(5-phospho-1-deoxy-D-ribulos-1-ylimino)methylamino]-1-(5-phospho-beta-D-ribosyl)imidazole-4-carboxamide + L-glutamine = D-erythro-1-(imidazol-4-yl)glycerol 3-phosphate + 5-amino-1-(5-phospho-beta-D-ribosyl)imidazole-4-carboxamide + L-glutamate + H(+). The enzyme catalyses L-glutamine + H2O = L-glutamate + NH4(+). It functions in the pathway amino-acid biosynthesis; L-histidine biosynthesis; L-histidine from 5-phospho-alpha-D-ribose 1-diphosphate: step 5/9. Functionally, IGPS catalyzes the conversion of PRFAR and glutamine to IGP, AICAR and glutamate. The HisH subunit catalyzes the hydrolysis of glutamine to glutamate and ammonia as part of the synthesis of IGP and AICAR. The resulting ammonia molecule is channeled to the active site of HisF. The sequence is that of Imidazole glycerol phosphate synthase subunit HisH from Bacillus licheniformis (strain ATCC 14580 / DSM 13 / JCM 2505 / CCUG 7422 / NBRC 12200 / NCIMB 9375 / NCTC 10341 / NRRL NRS-1264 / Gibson 46).